A 220-amino-acid chain; its full sequence is Putative phosphatase YhcW (220 aa).

Aspartate 8 (nucleophile) is an active-site residue. Residues aspartate 8, aspartate 10, and aspartate 166 each coordinate a divalent metal cation. Residue aspartate 10 is the Proton donor of the active site.

It belongs to the HAD-like hydrolase superfamily. CbbY/CbbZ/Gph/YieH family. A divalent metal cation serves as cofactor.

This chain is Putative phosphatase YhcW (yhcW), found in Bacillus subtilis (strain 168).